The chain runs to 260 residues: Transcription repressor OFP13 (260 aa).

One can recognise an OVATE domain in the interval 150–211; sequence VAMESEDPYG…VSAFVDLLSG (62 aa).

In terms of tissue distribution, expressed in roots, rosette and cauline leaves, shoots, stems, flower buds and siliques.

The protein localises to the nucleus. Transcriptional repressor that regulates multiple aspects of plant growth and development through the regulation of BEL1-LIKE (BLH) and KNOX TALE (KNAT) homeodomain transcription factors. This is Transcription repressor OFP13 (OFP13) from Arabidopsis thaliana (Mouse-ear cress).